Here is a 690-residue protein sequence, read N- to C-terminus: Proprotein convertase subtilisin/kexin type 9 (690 aa).

A signal peptide spans 1–28 (MGTVSSRRSWWPLPLLLLLLLGPAGARA). A propeptide spanning residues 29–150 (QEDEDGDYEE…IEEDSSVFAQ (122 aa)) is cleaved from the precursor. Sulfotyrosine is present on Y36. At S45 the chain carries Phosphoserine. The Inhibitor I9 domain maps to 75–147 (TYVVVLKEET…VDYIEEDSSV (73 aa)). One can recognise a Peptidase S8 domain in the interval 153–459 (PWNLERITPP…GWQLFCRTVW (307 aa)). Active-site charge relay system residues include D184 and H224. 2 disulfides stabilise this stretch: C221-C253 and C321-C356. The active-site Charge relay system is S384. Positions 448 to 690 (GAGWQLFCRT…HLAQASQELQ (243 aa)) are C-terminal domain. Disulfide bonds link C455–C525, C475–C524, and C484–C507. A glycan (N-linked (GlcNAc...) asparagine) is linked at N531. Cystine bridges form between C532/C599, C550/C598, C560/C586, C606/C677, C624/C676, and C633/C652. At S686 the chain carries Phosphoserine.

Belongs to the peptidase S8 family. Monomer. Can self-associate to form dimers and higher multimers which may have increased LDLR degrading activity. The precursor protein but not the mature protein may form multimers. Interacts with APOB, VLDLR, LRP8/APOER2 and BACE1. The full-length immature form (pro-PCSK9) interacts with SCNN1A, SCNN1B and SCNN1G. The pro-PCSK9 form (via C-terminal domain) interacts with LDLR. Interacts (via the C-terminal domain) with ANXA2 (via repeat Annexin 1); the interaction inhibits the degradation of LDLR. Requires Ca(2+) as cofactor. In terms of processing, cleavage by furin and PCSK5 generates a truncated inactive protein that is unable to induce LDLR degradation. Undergoes autocatalytic cleavage in the endoplasmic reticulum to release the propeptide from the N-terminus and the cleavage of the propeptide is strictly required for its maturation and activation. The cleaved propeptide however remains associated with the catalytic domain through non-covalent interactions, preventing potential substrates from accessing its active site. As a result, it is secreted from cells as a propeptide-containing, enzymatically inactive protein. Post-translationally, phosphorylation protects the propeptide against proteolysis.

It is found in the cytoplasm. The protein resides in the secreted. Its subcellular location is the endosome. It localises to the lysosome. The protein localises to the cell surface. It is found in the endoplasmic reticulum. The protein resides in the golgi apparatus. Its activity is regulated as follows. Its proteolytic activity is autoinhibited by the non-covalent binding of the propeptide to the catalytic domain. Inhibited by EGTA. Its function is as follows. Crucial player in the regulation of plasma cholesterol homeostasis. Binds to low-density lipid receptor family members: low density lipoprotein receptor (LDLR), very low density lipoprotein receptor (VLDLR), apolipoprotein E receptor (LRP1/APOER) and apolipoprotein receptor 2 (LRP8/APOER2), and promotes their degradation in intracellular acidic compartments. Acts via a non-proteolytic mechanism to enhance the degradation of the hepatic LDLR through a clathrin LDLRAP1/ARH-mediated pathway. May prevent the recycling of LDLR from endosomes to the cell surface or direct it to lysosomes for degradation. Can induce ubiquitination of LDLR leading to its subsequent degradation. Inhibits intracellular degradation of APOB via the autophagosome/lysosome pathway in a LDLR-independent manner. Involved in the disposal of non-acetylated intermediates of BACE1 in the early secretory pathway. Inhibits epithelial Na(+) channel (ENaC)-mediated Na(+) absorption by reducing ENaC surface expression primarily by increasing its proteasomal degradation. Regulates neuronal apoptosis via modulation of LRP8/APOER2 levels and related anti-apoptotic signaling pathways. This Pongo pygmaeus (Bornean orangutan) protein is Proprotein convertase subtilisin/kexin type 9 (PCSK9).